We begin with the raw amino-acid sequence, 1223 residues long: DNA-directed RNA polymerase subunit beta' (1223 aa).

Zn(2+)-binding residues include C60, C62, C75, and C78. Mg(2+) contacts are provided by D449, D451, and D453. 4 residues coordinate Zn(2+): C818, C892, C899, and C902.

The protein belongs to the RNA polymerase beta' chain family. The RNAP catalytic core consists of 2 alpha, 1 beta, 1 beta' and 1 omega subunit. When a sigma factor is associated with the core the holoenzyme is formed, which can initiate transcription. Requires Mg(2+) as cofactor. It depends on Zn(2+) as a cofactor.

It carries out the reaction RNA(n) + a ribonucleoside 5'-triphosphate = RNA(n+1) + diphosphate. DNA-dependent RNA polymerase catalyzes the transcription of DNA into RNA using the four ribonucleoside triphosphates as substrates. In Lactobacillus gasseri (strain ATCC 33323 / DSM 20243 / BCRC 14619 / CIP 102991 / JCM 1131 / KCTC 3163 / NCIMB 11718 / NCTC 13722 / AM63), this protein is DNA-directed RNA polymerase subunit beta'.